A 159-amino-acid polypeptide reads, in one-letter code: Ribosomal RNA large subunit methyltransferase H (159 aa).

S-adenosyl-L-methionine contacts are provided by residues Leu-76, Gly-108, and 127-132; that span reads FSKMTF.

Belongs to the RNA methyltransferase RlmH family. Homodimer.

The protein resides in the cytoplasm. It carries out the reaction pseudouridine(1915) in 23S rRNA + S-adenosyl-L-methionine = N(3)-methylpseudouridine(1915) in 23S rRNA + S-adenosyl-L-homocysteine + H(+). Its function is as follows. Specifically methylates the pseudouridine at position 1915 (m3Psi1915) in 23S rRNA. The sequence is that of Ribosomal RNA large subunit methyltransferase H from Staphylococcus aureus (strain MSSA476).